Consider the following 668-residue polypeptide: COBRA-like protein 11 (668 aa).

The N-terminal stretch at 1–29 is a signal peptide; that stretch reads MKKLRYVHLNLLLLLLPLINLQFPTLSLA. Residues Asn69, Asn125, Asn254, Asn318, Asn329, Asn358, Asn412, Asn432, Asn473, Asn552, Asn560, and Asn579 are each glycosylated (N-linked (GlcNAc...) asparagine). Ser636 is lipidated: GPI-anchor amidated serine. Positions 637 to 668 are cleaved as a propeptide — removed in mature form; sequence SGMRLSGIRFLPSILLAITTFHAITDRLLTGV.

This sequence belongs to the COBRA family. In terms of tissue distribution, mostly expressed in flowers, stamen, anthers and pollen, and, to a lower extent, possibly in roots, stems, leaves and siliques.

It is found in the cell membrane. Functionally, involved in the deposition of apical pectin cap and cellulose microfibrils in pollen tubes. Implicated in pollen tubes growth in the female transmitting tract of pistil and toward micropyles, via the perception of ovule guidance cues. This Arabidopsis thaliana (Mouse-ear cress) protein is COBRA-like protein 11.